The primary structure comprises 199 residues: Urease accessory protein UreG (199 aa).

8 to 15 (GPVGSGKT) is a binding site for GTP.

The protein belongs to the SIMIBI class G3E GTPase family. UreG subfamily. In terms of assembly, homodimer. UreH, UreF and UreG form a complex that acts as a GTP-hydrolysis-dependent molecular chaperone, activating the urease apoprotein by helping to assemble the nickel containing metallocenter of UreC. The UreE protein probably delivers the nickel.

It is found in the cytoplasm. Facilitates the functional incorporation of the urease nickel metallocenter. This process requires GTP hydrolysis, probably effectuated by UreG. This chain is Urease accessory protein UreG, found in Helicobacter pylori (strain P12).